The sequence spans 185 residues: Large ribosomal subunit protein uL5 (185 aa).

This sequence belongs to the universal ribosomal protein uL5 family. In terms of assembly, part of the 50S ribosomal subunit; part of the 5S rRNA/L5/L18/L25 subcomplex. Contacts the 5S rRNA and the P site tRNA. Forms a bridge to the 30S subunit in the 70S ribosome.

Its function is as follows. This is one of the proteins that bind and probably mediate the attachment of the 5S RNA into the large ribosomal subunit, where it forms part of the central protuberance. In the 70S ribosome it contacts protein S13 of the 30S subunit (bridge B1b), connecting the 2 subunits; this bridge is implicated in subunit movement. Contacts the P site tRNA; the 5S rRNA and some of its associated proteins might help stabilize positioning of ribosome-bound tRNAs. The sequence is that of Large ribosomal subunit protein uL5 from Treponema pallidum (strain Nichols).